The following is a 115-amino-acid chain: Probable 4-amino-4-deoxy-L-arabinose-phosphoundecaprenol flippase subunit ArnE (115 aa).

The next 4 helical transmembrane spans lie at 1 to 21 (MIVG…GQLC), 43 to 63 (WLAL…NVLQ), 65 to 85 (LPLS…TLAA), and 93 to 113 (TTAR…LMSI). The EamA domain maps to 44-113 (LALAVLLLGL…IMLGILLMSI (70 aa)).

It belongs to the ArnE family. Heterodimer of ArnE and ArnF.

The protein resides in the cell inner membrane. Its pathway is bacterial outer membrane biogenesis; lipopolysaccharide biosynthesis. In terms of biological role, translocates 4-amino-4-deoxy-L-arabinose-phosphoundecaprenol (alpha-L-Ara4N-phosphoundecaprenol) from the cytoplasmic to the periplasmic side of the inner membrane. In Serratia proteamaculans (strain 568), this protein is Probable 4-amino-4-deoxy-L-arabinose-phosphoundecaprenol flippase subunit ArnE.